Here is a 301-residue protein sequence, read N- to C-terminus: Protoheme IX farnesyltransferase (301 aa).

The next 9 helical transmembrane spans lie at 20 to 42 (FTEL…GMWL), 55 to 75 (VDVI…SGAF), 105 to 125 (ALMV…MTTW), 126 to 146 (QAGV…SLYA), 150 to 172 (LVSN…WFAV), 176 to 198 (FSIV…FYAI), 227 to 247 (MFFW…LGLV), 249 to 269 (VILA…GFKM), and 280 to 300 (FVYS…ISIF).

It belongs to the UbiA prenyltransferase family. Protoheme IX farnesyltransferase subfamily. As to quaternary structure, interacts with CtaA.

It is found in the cell membrane. It carries out the reaction heme b + (2E,6E)-farnesyl diphosphate + H2O = Fe(II)-heme o + diphosphate. It participates in porphyrin-containing compound metabolism; heme O biosynthesis; heme O from protoheme: step 1/1. Converts heme B (protoheme IX) to heme O by substitution of the vinyl group on carbon 2 of heme B porphyrin ring with a hydroxyethyl farnesyl side group. The sequence is that of Protoheme IX farnesyltransferase from Listeria innocua serovar 6a (strain ATCC BAA-680 / CLIP 11262).